The sequence spans 226 residues: MTTTELVALLHLASPALPIGAFSYSQGFEAALDANLIRDADTARDWIAGGLTDVLAHGELPFLAHQLARWHAHDADALARENAWFVASRESAELRRETEQMGWSLAQLCTSLEWGDTARRATLATISPIALPTAFAYAAAAHDASADAVLAAYAFGWVENQTSAALKAVPLGQLAGQRIIVALRGAIDAAVRRALATPPDAVNTFAPQLGILSARHETQYSRLFRS.

Belongs to the UreF family. As to quaternary structure, ureD, UreF and UreG form a complex that acts as a GTP-hydrolysis-dependent molecular chaperone, activating the urease apoprotein by helping to assemble the nickel containing metallocenter of UreC. The UreE protein probably delivers the nickel.

Its subcellular location is the cytoplasm. Required for maturation of urease via the functional incorporation of the urease nickel metallocenter. The chain is Urease accessory protein UreF from Burkholderia ambifaria (strain ATCC BAA-244 / DSM 16087 / CCUG 44356 / LMG 19182 / AMMD) (Burkholderia cepacia (strain AMMD)).